We begin with the raw amino-acid sequence, 217 residues long: Claudin-9 (217 aa).

Topologically, residues 1–7 are cytoplasmic; that stretch reads MASTGLE. A helical membrane pass occupies residues 8 to 28; sequence LLGMTLAVLGWLGTLVSCALP. The Extracellular portion of the chain corresponds to 29–81; the sequence is LWKVTAFIGNSIVVAQVVWEGLWMSCVVQSTGQMQCKVYDSLLALPQDLQAAR. The chain crosses the membrane as a helical span at residues 82 to 102; the sequence is ALCVIALLLALLGLLVAITGA. Topologically, residues 103-116 are cytoplasmic; sequence QCTTCVEDEGAKAR. Residues 117–137 traverse the membrane as a helical segment; that stretch reads IVLTAGVILLLAGILVLIPVC. Residues 138-159 are Extracellular-facing; it reads WTAHAIIQDFYNPLVAEALKRE. Residues 160 to 180 traverse the membrane as a helical segment; sequence LGASLYLGWAAAALLMLGGGL. Topologically, residues 181–217 are cytoplasmic; the sequence is LCCTCPPPQVERPRGPRLGYSIPSRSGASGLDKRDYV. Residues 194-217 are disordered; that stretch reads RGPRLGYSIPSRSGASGLDKRDYV.

This sequence belongs to the claudin family. Interacts with CLDN1, CD81 and OCLN. Expressed in the liver, in peripheral blood mononuclear cells and hepatocarcinoma cell lines.

It localises to the cell junction. The protein resides in the tight junction. It is found in the cell membrane. Functionally, plays a major role in tight junction-specific obliteration of the intercellular space, through calcium-independent cell-adhesion activity. (Microbial infection) Acts as a receptor for hepatitis C virus (HCV) entry into hepatic cells. This is Claudin-9 (CLDN9) from Homo sapiens (Human).